A 302-amino-acid polypeptide reads, in one-letter code: 4-hydroxy-tetrahydrodipicolinate synthase (302 aa).

Residue Thr46 coordinates pyruvate. Tyr134 (proton donor/acceptor) is an active-site residue. Lys162 acts as the Schiff-base intermediate with substrate in catalysis. Val204 contacts pyruvate.

It belongs to the DapA family. As to quaternary structure, homotetramer; dimer of dimers.

It localises to the cytoplasm. It catalyses the reaction L-aspartate 4-semialdehyde + pyruvate = (2S,4S)-4-hydroxy-2,3,4,5-tetrahydrodipicolinate + H2O + H(+). The protein operates within amino-acid biosynthesis; L-lysine biosynthesis via DAP pathway; (S)-tetrahydrodipicolinate from L-aspartate: step 3/4. In terms of biological role, catalyzes the condensation of (S)-aspartate-beta-semialdehyde [(S)-ASA] and pyruvate to 4-hydroxy-tetrahydrodipicolinate (HTPA). This is 4-hydroxy-tetrahydrodipicolinate synthase from Xanthomonas campestris pv. campestris (strain ATCC 33913 / DSM 3586 / NCPPB 528 / LMG 568 / P 25).